A 466-amino-acid polypeptide reads, in one-letter code: Gamma-glutamylpolyamine synthetase GlnA3 (466 aa).

Residues 127 to 466 (GRTVLRRIVA…GVAAAYRWKY (340 aa)) enclose the GS catalytic domain. Residues Glu151 and Glu153 each contribute to the Mg(2+) site. Glu202 is a binding site for ATP. Glu207 and Glu214 together coordinate Mg(2+). Gly259 contacts L-glutamate. Residue His263 coordinates Mg(2+). Ser267 serves as a coordination point for ATP. L-glutamate contacts are provided by Arg316 and Arg334. 2 residues coordinate ATP: Arg334 and Arg339. A Mg(2+)-binding site is contributed by Glu355.

This sequence belongs to the glutamine synthetase family. The cofactor is Mg(2+). Expressed in mycelium.

The enzyme catalyses spermine + L-glutamate + ATP = gamma-L-glutamylspermine + ADP + phosphate + H(+). It catalyses the reaction spermidine + L-glutamate + ATP = gamma-L-glutamylspermidine + ADP + phosphate + H(+). It carries out the reaction putrescine + L-glutamate + ATP = gamma-L-glutamylputrescine + ADP + phosphate + H(+). The catalysed reaction is cadaverine + L-glutamate + ATP = gamma-L-glutamylcadaverine + ADP + phosphate + H(+). The protein operates within amine and polyamine degradation; putrescine degradation. Its pathway is amine and polyamine degradation; spermidine degradation. It participates in amine and polyamine degradation; spermine degradation. Functionally, involved in the catabolism of polyamines. Catalyzes the ATP-dependent gamma-glutamylation of polyamines. Substrates include putrescine, cadaverine, spermidine and spermine, with a preference for long-chain polyamines spermidine and spermine. Is not able to compensate for the loss of glutamine synthetases (GSs). No complementation of the L-glutamine auxotrophy of an E.coli glnA mutant. Involved in morphological differentiation and in the production of secondary metabolites. Together with GlnA2, enables survival of S.coelicolor under exposure to high local environmental polyamine concentrations, which is toxic to the cells. The polypeptide is Gamma-glutamylpolyamine synthetase GlnA3 (Streptomyces coelicolor (strain ATCC BAA-471 / A3(2) / M145)).